The following is a 284-amino-acid chain: uncharacterized protein (284 aa).

The interval 236-284 (IDITNEADSSEIIDSEPSNKDETEKPSAQETDPFDGKPVDIKDDELPFD) is disordered. 2 stretches are compositionally biased toward basic and acidic residues: residues 252-262 (PSNKDETEKPS) and 269-284 (FDGK…LPFD).

This is an uncharacterized protein from Bacillus subtilis (strain 168).